A 1153-amino-acid chain; its full sequence is MTAPRYAEIGVTSNFSFLEGGSHPQEFVQQASALGLAAIGIADRNTLAGVVRAYSELDNEELFYKPKLLIGARLCFADGTPDILAYPTDRAAYGRLCRLLSAGKLRAGKGECHLSFADLEAFTKTSTPSWPGLSRPSTSSSKAVQVSVDARVKPGHDEAKRAAGESRLLLVLMPPYRFQSHEITAALTRLTALQGAGVWLALVPYYRGDDKRRLARLQRIAAAARVPGIASNDVLYHHESRRALQDVLTCVRDKTTIDKAGRLLESNAERYLKPTEEMARLFRADPDAIAETLRFADRISFTLDELKYQYPDEPVPPGKTAQQHLKDLTEQGIAEYFPNGIDAKLRATIDKELTIIAHRQYAPYFLTVHDIVRYARSQNILCQGRGSAANSAVCYVLGITCVDPTEIDLLFERFVSEERDEPPDIDVDFEHSRREEVMQYIYRRYGRHRAAIVSTVIHYRPRSAIRDVGKALGLSEDVTAALADTVWGSWGKGLNEMQVRQAGLDPTNPMIVRAIDLATELIGFPRHLSQHVGGYVLTQDRLDEFVPIGNAAMEERTFIEWDKDDIDAVKMMKVDVLALGMLTCIRKGFDLIAQHKGKRYELADIKSEDDNEVYKMLQRGESVGVFQVESRAQMNMLPRLRPRCFYDLVIEVAIVRPGPIQGDMVHPYLRRRNGQEPVVYPSPAGHAGEANELKTILGKTLGVPLFQEQAMRIAIEAAHFTPDEANQLRRAMATFRNVGTIGKFEAKMTGNLVARGYDPVFAQNCFEQIKGFGSYGFPESHAASFAKLVYVSAWLKHAHPDAFCCALLNSQPMGFYAPAQIVGDARQNGVEIRGVDVAYSFSQNTLEERCGQHHAVRLGFRQIDGFRWADFDEANLWQARGDAPPEDWGARIVEAREKSPFTSLEQFARATALPKRALILLADADAFRSLKLDRRAALWAVRRLPDDVPLPLFEVAKAREQQDENAAPLPLMPLAEHVVADYQTVRLSLKGHPMQFLRALFAAEGVNTCRAVSETRRNGRRARCAGVVLVRQRPGSAKGVVFITLEDETGIANLVVWPAVMEKFRKEVMGARLLWVEGKIQASPEGVVHLVAEELVDRSAEMARLSDELIAPSASTEREAPLNDDRRDHPDLPAQQIRHPRNVRILPPSRDFH.

A disordered region spans residues 1107–1153 (DELIAPSASTEREAPLNDDRRDHPDLPAQQIRHPRNVRILPPSRDFH). Residues 1116 to 1131 (TEREAPLNDDRRDHPD) are compositionally biased toward basic and acidic residues.

It belongs to the DNA polymerase type-C family. DnaE2 subfamily.

Its subcellular location is the cytoplasm. It carries out the reaction DNA(n) + a 2'-deoxyribonucleoside 5'-triphosphate = DNA(n+1) + diphosphate. In terms of biological role, DNA polymerase involved in damage-induced mutagenesis and translesion synthesis (TLS). It is not the major replicative DNA polymerase. The protein is Error-prone DNA polymerase of Rhodopseudomonas palustris (strain BisA53).